A 275-amino-acid chain; its full sequence is MNLLGKMIYVEGFMMIMATLLVSMSYGHRAMINDVAEAPVFDDVVSPNGLDSSWYDARATFYGDIHGGETQQGACGYGDLFKQGYGLETAALSTALFNEGYTCGACYQIMCVNDPQWCLPGSVKITATNFCPPDYSKTEGVWCNPPQKHFDLSLPMFLKIAQYKAGVVPVKYRRISCARTGGVKFETKGNPYFLMILPYNVGGAGDIKLMQVKGDKTGWITMQKNWGQNWTTGVNLTGQGISFRVTTSDGVTKDFNNVMPNNWGFGQTFDGKINF.

The signal sequence occupies residues 1–27; that stretch reads MNLLGKMIYVEGFMMIMATLLVSMSYG. Residues 72–182 enclose the Expansin-like EG45 domain; sequence QGACGYGDLF…RRISCARTGG (111 aa). Residues 192 to 271 enclose the Expansin-like CBD domain; it reads YFLMILPYNV…NWGFGQTFDG (80 aa).

Belongs to the expansin family. Expansin A subfamily.

Its subcellular location is the secreted. It is found in the cell wall. It localises to the membrane. In terms of biological role, causes loosening and extension of plant cell walls by disrupting non-covalent bonding between cellulose microfibrils and matrix glucans. No enzymatic activity has been found. The sequence is that of Expansin-A23 (EXPA23) from Arabidopsis thaliana (Mouse-ear cress).